A 324-amino-acid polypeptide reads, in one-letter code: Hydroxylase/desaturase CTB9 (324 aa).

Polar residues predominate over residues 1 to 11; that stretch reads MTSTITTTETL. Disordered stretches follow at residues 1–33 and 288–308; these read MTSTITTTETLQDAVPFVAPPSPPEDTSNKELP and TARRVPHSSFPTPDDFGEPRA.

It belongs to the asaB hydroxylase/desaturase family.

It participates in mycotoxin biosynthesis. In terms of biological role, hydroxylase/desaturase; part of the gene cluster that mediates the biosynthesis of cercosporin, a light-activated, non-host-selective toxin. The perylenequinone chromophore of cercosporin absorbs light energy to attain an electronically-activated triplet state and produces active oxygen species such as the hydroxyl radical, superoxide, hydrogen peroxide or singlet oxygen upon reaction with oxygen molecules. These reactive oxygen species cause damage to various cellular components including lipids, proteins and nucleic acids. The first step of cercosporin biosynthesis is performed by the polyketide synthase CTB1 which catalyzes the formation of nor-toralactone. The starter unit acyltransferase (SAT) domain of CTB1 initiates polyketide extension by the selective utilization of acetyl-CoA, which is elongated to the heptaketide in the beta-ketoacyl synthase (KS) domain by successive condensations with six malonyl units introduced by the malonyl acyltransferase (MAT) domain. The product template (PT) domain catalyzes C4-C9 and C2-C11 aldol cyclizations and dehydrations to a trihydroxynaphthalene, which is thought to be delivered to the thioesterase (TE) domain for product release. The bifunctional enzyme CTB3 then methylates nor-toralactone to toralactone before conducting an unusual oxidative aromatic ring opening. The O-methyltransferase CTB2 further methylates the nascent OH-6 of the CBT3 product, blocking further oxidation at this site before the reductase CTB6 reduces the 2-oxopropyl ketone at position C7, giving naphthalene. The FAD-dependent monooxygenase CTB5 in concert with the multicopper oxidase CTB12 are responsible for homodimerization of naphthalene with CTB7 installing the dioxepine moiety, finally producing cercosporin. The fasciclin domain-containing protein CTB11 might act with CTB5 and CTB12 whereas the roles of CTB9 and CTB10 have still to be elucidated. The protein is Hydroxylase/desaturase CTB9 of Cercospora beticola (Sugarbeet leaf spot fungus).